The chain runs to 315 residues: COMPASS component SWD3 (315 aa).

WD repeat units lie at residues 53 to 93 (SHAR…HTFI), 94 to 133 (GHTAPVISLTFNRKGNLLFTSSMDESIKIWDTLNGSLMKT), 136 to 178 (AHSE…KTLT), 187 to 228 (NGVV…RTFQ), 238 to 278 (HHSC…LLQL), and 285 to 315 (HHSSPVMSIHCFGNIMCSLALNGDCCLWRWV).

In terms of assembly, component of the Set1C/COMPASS complex which consists of SET1(2), BRE2(2), SPP1(2), SDC1(1), SHG1(1), SWD1(1), SWD2(1), and SWD3(1).

It is found in the nucleus. The protein resides in the chromosome. It localises to the telomere. In terms of biological role, the COMPASS (Set1C) complex specifically mono-, di- and trimethylates histone H3 to form H3K4me1/2/3, which subsequently plays a role in telomere length maintenance and transcription elongation regulation. COMPASS recognizes ubiquitinated H2B on one face of the nucleosome which stimulates the methylation of H3 on the opposing face. SWD3/CPS30 establishes COMPASS trimethylation activity and may also serve as the anchor point to properly tether and space the other subunits. The polypeptide is COMPASS component SWD3 (Saccharomyces cerevisiae (strain ATCC 204508 / S288c) (Baker's yeast)).